A 76-amino-acid chain; its full sequence is U-scoloptoxin(13)-Sm1a (76 aa).

The N-terminal stretch at 1–22 (MAYICAXTLAFLLCVNTGIIQA) is a signal peptide.

The protein belongs to the scoloptoxin-13 family. In terms of processing, contains 4 disulfide bonds. Expressed by the venom gland.

The protein localises to the secreted. The chain is U-scoloptoxin(13)-Sm1a from Scolopendra morsitans (Tanzanian blue ringleg centipede).